Here is a 181-residue protein sequence, read N- to C-terminus: Bifunctional protein PyrR (181 aa).

The short motif at valine 101 to threonine 113 is the PRPP-binding element.

It belongs to the purine/pyrimidine phosphoribosyltransferase family. PyrR subfamily.

The catalysed reaction is UMP + diphosphate = 5-phospho-alpha-D-ribose 1-diphosphate + uracil. Functionally, regulates the transcription of the pyrimidine nucleotide (pyr) operon in response to exogenous pyrimidines. Also displays a weak uracil phosphoribosyltransferase activity which is not physiologically significant. The protein is Bifunctional protein PyrR of Desulfosudis oleivorans (strain DSM 6200 / JCM 39069 / Hxd3) (Desulfococcus oleovorans).